Here is a 665-residue protein sequence, read N- to C-terminus: Lamin-A (665 aa).

Met-1 bears the N-acetylmethionine mark. The head stretch occupies residues 1-29 (METPGQKRATRSTHTPLSPTRITRLQEKE). Ser-18 bears the Phosphoserine mark. Residues 27 to 383 (EKEDLQGLND…KLLEGEEERL (357 aa)) enclose the IF rod domain. The coil 1A stretch occupies residues 30 to 66 (DLQGLNDRLAVYIDKVRSLELENARLRLRITESEDVI). The interval 67–76 (SREVTGIKSA) is linker 1. The coil 1B stretch occupies residues 77-214 (YETELADARK…SIYNEEMRET (138 aa)). Positions 215-238 (KRRHETRLVEVDNGRQREFESKLA) are linker 2. A coil 2 region spans residues 239 to 383 (DALHELRAQH…KLLEGEEERL (145 aa)). Disordered stretches follow at residues 381 to 441 (ERLR…SVEE), 550 to 581 (DDED…GEYN), and 602 to 641 (ASQG…LGES). Residues 384-664 (RLSPSPNTQK…AQVAPQNCSI (281 aa)) form a tail region. Ser-388 bears the Phosphoserine mark. A compositionally biased stretch (low complexity) spans 399–411 (IASHSGAHISSSA). The short motif at 413–418 (KRRRLE) is the Nuclear localization signal element. The region spanning 425 to 542 (SSFTQHARTT…EEVAMRKLVR (118 aa)) is the LTD domain. Polar residues predominate over residues 427–436 (FTQHARTTGK). Positions 605–630 (GSGLVTGSSGSSSSSVTLTRTYRSTG) are enriched in low complexity. Cysteine methyl ester is present on Cys-662. Cys-662 is lipidated: S-farnesyl cysteine. A propeptide spans 663-665 (SIM) (removed in mature form).

Belongs to the intermediate filament family. As to quaternary structure, homodimer. Lamin dimers then assemble into dimeric head-to-tail polymers. Ultimately, two head-to-tail polymers assemble laterally into a protofilament with a uniformly shaped rod of 3.5 nm in diameter. In terms of processing, phosphorylation plays a key role in lamin organization, subcellular localization and nuclear envelope disintegration. Phosphorylation by CDK1 at Ser-18 at the onset of mitosis drives lamin disassembly and nuclear envelope breakdown.

It localises to the nucleus lamina. The protein localises to the nucleus envelope. Its subcellular location is the nucleus. It is found in the nucleoplasm. The protein resides in the nucleus matrix. Lamins are intermediate filament proteins that assemble into a filamentous meshwork, and which constitute the major components of the nuclear lamina, a fibrous layer on the nucleoplasmic side of the inner nuclear membrane. Lamins provide a framework for the nuclear envelope, bridging the nuclear envelope and chromatin, thereby playing an important role in nuclear assembly, chromatin organization, nuclear membrane and telomere dynamics. The structural integrity of the lamina is strictly controlled by the cell cycle, as seen by the disintegration and formation of the nuclear envelope in prophase and telophase, respectively. The protein is Lamin-A (lmna) of Xenopus laevis (African clawed frog).